The sequence spans 340 residues: Methionine import ATP-binding protein MetN (340 aa).

Residues 5–243 (IEFRGVTKSF…PQTTTARRFV (239 aa)) enclose the ABC transporter domain. Residue 40 to 47 (GYSGAGKS) participates in ATP binding.

It belongs to the ABC transporter superfamily. Methionine importer (TC 3.A.1.24) family. As to quaternary structure, the complex is composed of two ATP-binding proteins (MetN), two transmembrane proteins (MetI) and a solute-binding protein (MetQ).

The protein resides in the cell membrane. It carries out the reaction L-methionine(out) + ATP + H2O = L-methionine(in) + ADP + phosphate + H(+). The enzyme catalyses D-methionine(out) + ATP + H2O = D-methionine(in) + ADP + phosphate + H(+). Its function is as follows. Part of the ABC transporter complex MetNIQ involved in methionine import. Responsible for energy coupling to the transport system. The polypeptide is Methionine import ATP-binding protein MetN (Leifsonia xyli subsp. xyli (strain CTCB07)).